We begin with the raw amino-acid sequence, 175 residues long: Putative lipoprotein LppN (175 aa).

The signal sequence occupies residues 1–20 (MRLPGRHVLYALSAVTMLAA). Cys-21 is lipidated: N-palmitoyl cysteine. Cys-21 carries S-diacylglycerol cysteine lipidation. Residues 31–56 (ASTNMNPTNPPATAETATVSPTPAPQ) form a disordered region. Residues 33 to 48 (TNMNPTNPPATAETAT) are compositionally biased toward low complexity.

It localises to the cell membrane. This chain is Putative lipoprotein LppN (lppN), found in Mycobacterium bovis (strain ATCC BAA-935 / AF2122/97).